Consider the following 289-residue polypeptide: Protoheme IX farnesyltransferase 2 (289 aa).

A run of 9 helical transmembrane segments spans residues 1–21 (MIKPGIIMGNLISVTGGFLLA), 28–48 (LTLMLMTILGLSLVVASGCGL), 76–96 (YSVLVFSLALGLIGFGLLAIF), 100–120 (IALLFAVIGYLVYVGIYSLYM), 125–145 (VYGTLIGSFSGAVPPVVGYCA), 155–175 (VILLLMFSLWQMPHSYAIAIF), 199–219 (LHIVLYIAVFSLVSALLPLAG), 221–241 (TGIAFMAVTCATSLWWLGMAL), and 260–280 (CSIVTITALSIAMAMDFQLVV).

It belongs to the UbiA prenyltransferase family. Protoheme IX farnesyltransferase subfamily.

It localises to the cell inner membrane. It carries out the reaction heme b + (2E,6E)-farnesyl diphosphate + H2O = Fe(II)-heme o + diphosphate. Its pathway is porphyrin-containing compound metabolism; heme O biosynthesis; heme O from protoheme: step 1/1. In terms of biological role, converts heme B (protoheme IX) to heme O by substitution of the vinyl group on carbon 2 of heme B porphyrin ring with a hydroxyethyl farnesyl side group. The chain is Protoheme IX farnesyltransferase 2 from Shewanella woodyi (strain ATCC 51908 / MS32).